The chain runs to 368 residues: D-alanine--D-alanine ligase (368 aa).

The ATP-grasp domain occupies 151-358 (KKLLAAEGLP…YGTLVSTLVD (208 aa)). 179–234 (RSRLHLPVFVKPARGGSSIGITRVAEWAALDDAIAHARRHDPKVIVESGIAGREVE) contacts ATP. Mg(2+) is bound by residues Asp-313, Glu-325, and Asn-327.

It belongs to the D-alanine--D-alanine ligase family. Mg(2+) serves as cofactor. Mn(2+) is required as a cofactor.

It localises to the cytoplasm. The enzyme catalyses 2 D-alanine + ATP = D-alanyl-D-alanine + ADP + phosphate + H(+). It functions in the pathway cell wall biogenesis; peptidoglycan biosynthesis. Functionally, cell wall formation. The chain is D-alanine--D-alanine ligase from Rhodococcus opacus (strain B4).